We begin with the raw amino-acid sequence, 137 residues long: Large ribosomal subunit protein uL16c (137 aa).

The protein belongs to the universal ribosomal protein uL16 family. Part of the 50S ribosomal subunit.

It is found in the plastid. The chain is Large ribosomal subunit protein uL16c (rpl16) from Helicosporidium sp. subsp. Simulium jonesii (Green alga).